Reading from the N-terminus, the 92-residue chain is Small ribosomal subunit protein uS19c (92 aa).

The protein belongs to the universal ribosomal protein uS19 family.

The protein resides in the plastid. The protein localises to the chloroplast. In terms of biological role, protein S19 forms a complex with S13 that binds strongly to the 16S ribosomal RNA. This is Small ribosomal subunit protein uS19c from Thalassiosira pseudonana (Marine diatom).